The following is a 422-amino-acid chain: Glutamate-1-semialdehyde 2,1-aminomutase (422 aa).

N6-(pyridoxal phosphate)lysine is present on K258.

Belongs to the class-III pyridoxal-phosphate-dependent aminotransferase family. HemL subfamily. As to quaternary structure, homodimer. Pyridoxal 5'-phosphate serves as cofactor.

The protein localises to the cytoplasm. It carries out the reaction (S)-4-amino-5-oxopentanoate = 5-aminolevulinate. The protein operates within porphyrin-containing compound metabolism; protoporphyrin-IX biosynthesis; 5-aminolevulinate from L-glutamyl-tRNA(Glu): step 2/2. The polypeptide is Glutamate-1-semialdehyde 2,1-aminomutase (Chlamydia trachomatis serovar L2 (strain ATCC VR-902B / DSM 19102 / 434/Bu)).